We begin with the raw amino-acid sequence, 309 residues long: Porphobilinogen deaminase (309 aa).

S-(dipyrrolylmethanemethyl)cysteine is present on Cys240.

Belongs to the HMBS family. In terms of assembly, monomer. It depends on dipyrromethane as a cofactor.

The catalysed reaction is 4 porphobilinogen + H2O = hydroxymethylbilane + 4 NH4(+). It participates in porphyrin-containing compound metabolism; protoporphyrin-IX biosynthesis; coproporphyrinogen-III from 5-aminolevulinate: step 2/4. Functionally, tetrapolymerization of the monopyrrole PBG into the hydroxymethylbilane pre-uroporphyrinogen in several discrete steps. The sequence is that of Porphobilinogen deaminase from Brevibacillus brevis (strain 47 / JCM 6285 / NBRC 100599).